Consider the following 323-residue polypeptide: Macrolide efflux protein A (323 aa).

A run of 9 helical transmembrane segments spans residues 6–26, 51–71, 105–125, 128–148, 182–202, 219–239, 245–265, 270–290, and 303–323; these read VLSM…AIGV, LTIV…VLFI, SLQS…YSVW, NAII…VLIV, FALL…NALF, ITEI…GLFG, ILLI…SGLL, FFIF…YSGV, and YLGR…PIGL.

Belongs to the major facilitator superfamily. Drug:H(+) antiporter-3 (DHA3) (TC 2.A.1.21) family.

It is found in the cell membrane. In terms of biological role, confers resistance to 14-membered macrolides including erythromycin and to 15-membered macrolides but not to 16-membered macrolides, lincosamides or analogs of streptogramin B. May function as an efflux pump to regulate intracellular macrolide levels. The sequence is that of Macrolide efflux protein A (mefA) from Enterococcus faecalis (Streptococcus faecalis).